Consider the following 832-residue polypeptide: Sodium/hydrogen exchanger 3 (832 aa).

The first 29 residues, 1–29 (MGRNRSGCVARCVSLTALVLLLCCPVVRS), serve as a signal peptide directing secretion. At 30–66 (SEAETDPDSHTEHGDSHGGSREGNDTGFQIVTFRWEH) the chain is on the extracellular side. The tract at residues 31-51 (EAETDPDSHTEHGDSHGGSRE) is disordered. A compositionally biased stretch (basic and acidic residues) spans 36 to 51 (PDSHTEHGDSHGGSRE). A helical transmembrane segment spans residues 67–89 (VQTPYVIALWILVASLGKIVFHL). Topologically, residues 90–97 (SEKVTSVV) are cytoplasmic. Residues 98–117 (PESALLIVLGLILGGIVWAA) form a helical membrane-spanning segment. At 118-126 (DHSASFTLT) the chain is on the extracellular side. Residues 127 to 144 (PTVFFFYLLPPIVLDAGY) traverse the membrane as a helical segment. Topologically, residues 145 to 147 (FMP) are cytoplasmic. The helical transmembrane segment at 148 to 183 (NRHFFGNLGTILTYAVIGTVWNAATTGLSLYGVFLL) threads the bilayer. A 1,2-diacyl-sn-glycero-3-phospho-(1D-myo-inositol) contacts are provided by Gly153, Gly156, and Thr157. Residues 184-196 (GLMGDLKAGLLEF) lie on the Extracellular side of the membrane. A helical membrane pass occupies residues 197–218 (LLFGSLIAAVDPVAVLAVFEEV). Topologically, residues 219–220 (HV) are cytoplasmic. The helical transmembrane segment at 221-252 (NEVLFIIVFGESLLNDAVTVVLYNVFNSFVEV) threads the bilayer. Residues 253 to 259 (GAGNVQG) are Extracellular-facing. Residues 260 to 294 (LDYFKGIVSFFVVSLGGTAVGIIFAFILSLVTRFT) form a helical membrane-spanning segment. The Cytoplasmic segment spans residues 295–296 (KH). Residues 297–319 (VRVIEPGFVFVISYLSYLTADML) traverse the membrane as a helical segment. Residues 320–321 (SL) lie on the Extracellular side of the membrane. A helical membrane pass occupies residues 322–338 (SAILAITFCGICCQKYV). Over 339 to 345 (KANLCEQ) the chain is Cytoplasmic. The helical transmembrane segment at 346-374 (SITTVRYAMKMLASGAETIIFMFLGISAV) threads the bilayer. The Extracellular segment spans residues 375 to 382 (NPTIWTWN). Residues 383–404 (TAFILLTLVFISVYRVIGVVIQ) traverse the membrane as a helical segment. Topologically, residues 405-417 (TWILNHYRVVQLE) are cytoplasmic. Residues 418-441 (IIDQVVMSYGGLRGAVAFALVVLL) traverse the membrane as a helical segment. At 442–448 (DSNYVGE) the chain is on the extracellular side. A helical transmembrane segment spans residues 449–482 (RRLFVSTTIIVVYFTVIFQGLTIKPLVKWLKVKR). The Cytoplasmic portion of the chain corresponds to 483–832 (SQHKEPLLNE…PLSFLPESSM (350 aa)). Residues Gln512, Ile513, and His515 each coordinate a 1,2-diacyl-sn-glycero-3-phospho-(1D-myo-inositol). Residues 740 to 760 (TPASNDADETGTGIDNPSFSN) form a disordered region.

This sequence belongs to the monovalent cation:proton antiporter 1 (CPA1) transporter (TC 2.A.36) family. In terms of assembly, homodimer. Detected in early distal renal tubules in the kidney bundle zone, in proximal and late distal tubules in the kidney sinus zone, in absorptive epithelial cells of the intestine and in rectal epithelium (at protein level). Isoform 1 is expressed strongly in the gills, at intermediate levels in the kidney, spleen, rectum, spiral intestine and skin, and weakly in the brain, blood and rectal gland. Isoform 2 is expressed strongly in the kidney, rectum and spiral intestine, and weakly in muscles and the rectal gland.

The protein resides in the apical cell membrane. The protein localises to the cell membrane. Its subcellular location is the recycling endosome membrane. It is found in the early endosome membrane. The enzyme catalyses Na(+)(in) + H(+)(out) = Na(+)(out) + H(+)(in). Seems to switch between active and inactive modes in response to various stimuli. Activated directly or indirectly by membrane phosphatidylinositol (PIs). Regulated by a variety of auxiliary proteins, which facilitate the maturation, cell surface expression and function of the transporter. Inhibited specifically by the drug tenapanor. In terms of biological role, plasma membrane Na(+)/H(+) antiporter. Exchanges intracellular H(+) ions for extracellular Na(+) in 1:1 stoichiometry, playing a key role in salt and fluid absorption and pH homeostasis. Major apical Na(+)/H(+) exchanger in kidney and intestine playing an important role in renal and intestine Na(+) absorption and blood pressure regulation. The protein is Sodium/hydrogen exchanger 3 of Triakis scyllium (Banded houndshark).